The primary structure comprises 152 residues: Sorting nexin-3 (152 aa).

Positions 30-147 (NFLEIEVRSP…CAFIQDPQWD (118 aa)) constitute a PX domain. A 1,2-diacyl-sn-glycero-3-phospho-(1D-myo-inositol-3-phosphate)-binding residues include Arg73, Ser75, Lys99, Arg104, and Arg113.

The protein belongs to the sorting nexin family.

The protein localises to the cytoplasm. It localises to the golgi apparatus membrane. The protein resides in the prevacuolar compartment membrane. Its function is as follows. Required for retention of late Golgi membrane proteins. Component of the retrieval machinery that functions by direct interaction with the cytosolic tails of certain TGN membrane proteins during the sorting/budding process at the prevacuolar compartment. Binds phosphatidylinositol 3-phosphate (PtdIns(P3)). This chain is Sorting nexin-3 (SNX3), found in Yarrowia lipolytica (strain CLIB 122 / E 150) (Yeast).